A 1015-amino-acid chain; its full sequence is Putative calcium-transporting ATPase 7, plasma membrane-type (1015 aa).

N-acetylmethionine is present on Met-1. The Cytoplasmic segment spans residues Met-1–Ser-161. Residues Val-20–Val-31 form an interaction with calmodulin region. Position 45 is a phosphoserine; by CPK (Ser-45). The helical transmembrane segment at Phe-162–Ala-182 threads the bilayer. Topologically, residues Phe-183–His-200 are lumenal. A helical transmembrane segment spans residues Asp-201–Tyr-221. Over Arg-222–Leu-349 the chain is Cytoplasmic. The helical transmembrane segment at Asn-350–Ala-369 threads the bilayer. The Lumenal segment spans residues Val-370–Tyr-399. A helical transmembrane segment spans residues Phe-400–Leu-417. The Cytoplasmic segment spans residues Ala-418–Ile-811. Residue Asp-455 is the 4-aspartylphosphate intermediate of the active site. Asp-756 and Asp-760 together coordinate Mg(2+). Residues Gln-812–Phe-830 traverse the membrane as a helical segment. Residues Ser-831–Leu-841 are Lumenal-facing. The helical transmembrane segment at Thr-842–Ala-862 threads the bilayer. Residues Thr-863–Phe-882 are Cytoplasmic-facing. The helical transmembrane segment at Ile-883–Leu-905 threads the bilayer. The Lumenal segment spans residues Gln-906–Gly-917. The helical transmembrane segment at Ser-918–Asn-939 threads the bilayer. Topologically, residues Glu-940–Asp-957 are cytoplasmic. The helical transmembrane segment at Asn-958–Leu-979 threads the bilayer. The Lumenal segment spans residues Gly-980–Thr-989. A helical membrane pass occupies residues Ile-990–Lys-1011. At Lys-1012–Val-1015 the chain is on the cytoplasmic side.

The protein belongs to the cation transport ATPase (P-type) (TC 3.A.3) family. Type IIB subfamily.

Its subcellular location is the membrane. The catalysed reaction is Ca(2+)(in) + ATP + H2O = Ca(2+)(out) + ADP + phosphate + H(+). With respect to regulation, activated by calmodulin. This magnesium-dependent enzyme catalyzes the hydrolysis of ATP coupled with the translocation of calcium from the cytosol out of the cell or into organelles. In Arabidopsis thaliana (Mouse-ear cress), this protein is Putative calcium-transporting ATPase 7, plasma membrane-type (ACA7).